Reading from the N-terminus, the 1685-residue chain is PHD and RING finger domain-containing protein 1 (1685 aa).

The segment at 1–82 (MDDDNLDELV…GSEDSEDGIE (82 aa)) is disordered. The span at 41–81 (DSEDDTGSEQDDDTDGEETEGLSEEEDPEDRSGSEDSEDGI) shows a compositional bias: acidic residues. The RING-type; degenerate zinc finger occupies 109–150 (CPICLNAFRDQAVGTPETCAHYFCLDCIIEWSRNANSCPVDR). The PHD-type zinc-finger motif lies at 188–238 (PTFCEVCGRSDREDRLLLCDGCDAGYHMECLDPPLQEVPVDEWFCPECAVP). Disordered stretches follow at residues 333-390 (PLTP…KLKN), 449-483 (DSNG…VARP), 537-590 (SAKR…GLSC), 606-777 (TPVR…GSSF), and 809-860 (KVQR…LLPS). T335 carries the phosphothreonine modification. Composition is skewed to basic residues over residues 339–364 (PAKR…RSSV) and 372–387 (RAKK…KGRK). Phosphoserine occurs at positions 450 and 460. Polar residues-rich tracts occupy residues 606–625 (TPVR…GNLS) and 637–662 (SPRL…NFPS). Positions 671 to 682 (QKTDPRRPDFSK) are enriched in basic and acidic residues. Polar residues-rich tracts occupy residues 694-709 (SNST…QTVE) and 737-751 (SSRG…TSGS). Phosphoserine occurs at positions 817, 848, 849, 867, 870, 922, 948, 984, and 1002. Residues 835–860 (PFDPTGSDSSPPSSSPESLGSGLLPS) are compositionally biased toward low complexity. Disordered stretches follow at residues 892 to 1229 (GTEM…VSEV), 1290 to 1355 (QLDD…APSD), and 1369 to 1390 (TTLS…SGRG). The segment covering 922-934 (SDLEQEGLGEIEP) has biased composition (acidic residues). The segment covering 1001–1010 (SSRSRSTSSS) has biased composition (low complexity). 2 stretches are compositionally biased toward basic residues: residues 1011–1031 (RSRK…RTRS) and 1054–1064 (KRHRAKTKSRR). Over residues 1065–1075 (SSSDRASSQDR) the composition is skewed to basic and acidic residues. Composition is skewed to basic residues over residues 1089 to 1102 (GPWG…KSRS) and 1117 to 1129 (SRRR…GSRS). Basic and acidic residues-rich tracts occupy residues 1130-1143 (RGRD…LERD) and 1151-1165 (RSRE…MTRS). Phosphoserine occurs at positions 1135 and 1139. A compositionally biased stretch (basic residues) spans 1181–1191 (RTRRPHSREKH). The segment covering 1192–1201 (PHSPEKKGAV) has biased composition (basic and acidic residues). At S1205 the chain carries Phosphoserine. A compositionally biased stretch (low complexity) spans 1292–1305 (DDMSSPPSPESTDS). 2 positions are modified to phosphoserine: S1372 and S1383. Residue T1416 is modified to Phosphothreonine. Disordered stretches follow at residues 1421-1448 (EAEA…EGDW), 1466-1501 (LPPP…VGTL), and 1569-1591 (LAVP…AEKT). Residues 1577 to 1591 (SEERTATPKTAAEKT) show a composition bias toward basic and acidic residues. Residues 1589–1615 (EKTKKEEYMKKLHMQERAVEEVKLAIK) are a coiled coil.

As to quaternary structure, interacts with POLR2A (via the C-terminal domain).

The chain is PHD and RING finger domain-containing protein 1 from Rattus norvegicus (Rat).